The chain runs to 88 residues: Cell division topological specificity factor (88 aa).

This sequence belongs to the MinE family.

Its function is as follows. Prevents the cell division inhibition by proteins MinC and MinD at internal division sites while permitting inhibition at polar sites. This ensures cell division at the proper site by restricting the formation of a division septum at the midpoint of the long axis of the cell. In Methylibium petroleiphilum (strain ATCC BAA-1232 / LMG 22953 / PM1), this protein is Cell division topological specificity factor.